The sequence spans 312 residues: Acetyl-coenzyme A carboxylase carboxyl transferase subunit alpha (312 aa).

Residues 36 to 286 (NLEKEISKTY…ADYVKKSLNE (251 aa)) enclose the CoA carboxyltransferase C-terminal domain.

Belongs to the AccA family. In terms of assembly, acetyl-CoA carboxylase is a heterohexamer composed of biotin carboxyl carrier protein (AccB), biotin carboxylase (AccC) and two subunits each of ACCase subunit alpha (AccA) and ACCase subunit beta (AccD).

It is found in the cytoplasm. The catalysed reaction is N(6)-carboxybiotinyl-L-lysyl-[protein] + acetyl-CoA = N(6)-biotinyl-L-lysyl-[protein] + malonyl-CoA. It functions in the pathway lipid metabolism; malonyl-CoA biosynthesis; malonyl-CoA from acetyl-CoA: step 1/1. Its function is as follows. Component of the acetyl coenzyme A carboxylase (ACC) complex. First, biotin carboxylase catalyzes the carboxylation of biotin on its carrier protein (BCCP) and then the CO(2) group is transferred by the carboxyltransferase to acetyl-CoA to form malonyl-CoA. This is Acetyl-coenzyme A carboxylase carboxyl transferase subunit alpha from Campylobacter jejuni subsp. jejuni serotype O:6 (strain 81116 / NCTC 11828).